The primary structure comprises 283 residues: Nucleotide-binding protein IL0393 (283 aa).

8–15 (GRSGSGKT) contacts ATP. 56–59 (DVRN) lines the GTP pocket.

It belongs to the RapZ-like family.

Its function is as follows. Displays ATPase and GTPase activities. This chain is Nucleotide-binding protein IL0393, found in Idiomarina loihiensis (strain ATCC BAA-735 / DSM 15497 / L2-TR).